Reading from the N-terminus, the 261-residue chain is tRNA pseudouridine synthase A (261 aa).

The Nucleophile role is filled by D51. Y109 contacts substrate.

Belongs to the tRNA pseudouridine synthase TruA family. In terms of assembly, homodimer.

It carries out the reaction uridine(38/39/40) in tRNA = pseudouridine(38/39/40) in tRNA. In terms of biological role, formation of pseudouridine at positions 38, 39 and 40 in the anticodon stem and loop of transfer RNAs. The protein is tRNA pseudouridine synthase A of Shewanella halifaxensis (strain HAW-EB4).